Here is a 396-residue protein sequence, read N- to C-terminus: Methylthioribose kinase (396 aa).

Residues Asn-44, Lys-61, and 115-117 (EDL) contribute to the ATP site. Substrate is bound at residue Asp-233. Position 250-252 (250-252 (DPE)) interacts with ATP. Arg-340 is a substrate binding site.

The protein belongs to the methylthioribose kinase family. In terms of assembly, homodimer.

It carries out the reaction 5-(methylsulfanyl)-D-ribose + ATP = 5-(methylsulfanyl)-alpha-D-ribose 1-phosphate + ADP + H(+). Its pathway is amino-acid biosynthesis; L-methionine biosynthesis via salvage pathway; S-methyl-5-thio-alpha-D-ribose 1-phosphate from S-methyl-5'-thioadenosine (hydrolase route): step 2/2. In terms of biological role, catalyzes the phosphorylation of methylthioribose into methylthioribose-1-phosphate. The protein is Methylthioribose kinase of Geobacillus kaustophilus (strain HTA426).